Reading from the N-terminus, the 177-residue chain is ATP synthase subunit delta (177 aa).

The protein belongs to the ATPase delta chain family. As to quaternary structure, F-type ATPases have 2 components, F(1) - the catalytic core - and F(0) - the membrane proton channel. F(1) has five subunits: alpha(3), beta(3), gamma(1), delta(1), epsilon(1). F(0) has three main subunits: a(1), b(2) and c(10-14). The alpha and beta chains form an alternating ring which encloses part of the gamma chain. F(1) is attached to F(0) by a central stalk formed by the gamma and epsilon chains, while a peripheral stalk is formed by the delta and b chains.

Its subcellular location is the cell inner membrane. In terms of biological role, f(1)F(0) ATP synthase produces ATP from ADP in the presence of a proton or sodium gradient. F-type ATPases consist of two structural domains, F(1) containing the extramembraneous catalytic core and F(0) containing the membrane proton channel, linked together by a central stalk and a peripheral stalk. During catalysis, ATP synthesis in the catalytic domain of F(1) is coupled via a rotary mechanism of the central stalk subunits to proton translocation. Functionally, this protein is part of the stalk that links CF(0) to CF(1). It either transmits conformational changes from CF(0) to CF(1) or is implicated in proton conduction. The chain is ATP synthase subunit delta from Serratia proteamaculans (strain 568).